A 112-amino-acid polypeptide reads, in one-letter code: cAMP-regulated phosphoprotein 19 (112 aa).

Residues 1–11 are compositionally biased toward low complexity; the sequence is MSAESPEPASA. The tract at residues 1-48 is disordered; sequence MSAESPEPASAEEQKEMEDKVISPEKAEEAKLKARYPHLGQKPGGSDF. At S2 the chain carries N-acetylserine. The segment covering 12 to 32 has biased composition (basic and acidic residues); it reads EEQKEMEDKVISPEKAEEAKL. S62 and S104 each carry phosphoserine; by GWL. Residues 73 to 112 form a disordered region; sequence KNKQLPTAAPDKTEVTGDHIPTPQDLPQRKPSLVASKLAG. At S104 the chain carries Phosphoserine; by PKA.

The protein belongs to the endosulfine family. In terms of assembly, interacts (when phosphorylated at Ser-62) with PPP2R2D. Phosphorylation at Ser-62 by MASTL/GWL during mitosis is essential for interaction with PPP2R2D (PR55-delta) and subsequent inactivation of PP2A.

It localises to the cytoplasm. In terms of biological role, protein phosphatase inhibitor that specifically inhibits protein phosphatase 2A (PP2A) during mitosis. Inhibition of PP2A is enhanced when ARPP19 is phosphorylated. When phosphorylated at Ser-62 during mitosis, specifically interacts with PPP2R2D (PR55-delta) and inhibits its activity, leading to inactivation of PP2A, an essential condition to keep cyclin-B1-CDK1 activity high during M phase. The protein is cAMP-regulated phosphoprotein 19 (ARPP19) of Gallus gallus (Chicken).